Reading from the N-terminus, the 649-residue chain is MPVEEPLATLSSIPDSSADQAPPLIADEFTLDLPRIPSLELPLNVSTKHSSIQKAIKMCGGIEKVKEAFKEHGPIESQHGLQLYLNDDTDSDGSKSYFNEHPVIGKRVPFRDESVILKVTMPKGTLSKNNNSVKDSIKSLKDSNKLRVTPVSIVDNTIKFREMSDFQIKLDNVPSAREFKSSFGSLEWNNFKSFVNSVPDNDSQPQENIGNLILDRSVKIPSTDFQLPPPPKLSMVGFPLLYKYKANPFAKKKKNGVTEVKGTYIKNYQLFVHDLSDKTVIPSQAHEQVLYDFEVAKKTKVYPGTKSDSKFYESLEECLKILRELFARRPIWVKRHLDGIVPKKIHHTMKIALALISYRFTMGPWRNTYIKFGIDPRSSVEYAQYQTEYFKIERKLLSSPIVKKNVPKPPPLVFESDTPGGIDSRFKFDGKRIPWYLMLQIDLLIGEPNIAEVFHNVEYLDKANELTGWFKELDLVKIRRIVKYELGCMVQGNYEYNKYKLKYFKTMLFVKESMVPENKNSEEGMGVNTNKDADGDINMDAGSQMSSNAIEEDKGIAAGDDFDDNGAITEEPDDAALENEEMDTDQNLKVPASIDDDVDDVDADEEEQESFDVKTASFQDIINKIAKLDPKTAETMKSELKGFVDEVDL.

Residues 1–21 (MPVEEPLATLSSIPDSSADQA) are disordered. Residues 9–19 (TLSSIPDSSAD) are compositionally biased toward polar residues. Residues 221–239 (PSTDFQLPPPPKLSMVGFP) form repeat 1. The interval 221-419 (PSTDFQLPPP…PPLVFESDTP (199 aa)) is 2 X repeats, Pro-rich. The Nuclear localization signal motif lies at 296–300 (AKKTK). Repeat 2 spans residues 400 to 419 (PIVKKNVPKPPPLVFESDTP). The tract at residues 556–612 (IAAGDDFDDNGAITEEPDDAALENEEMDTDQNLKVPASIDDDVDDVDADEEEQESFD) is disordered. 2 stretches are compositionally biased toward acidic residues: residues 560-584 (DDFDDNGAITEEPDDAALENEEMDT) and 594-610 (IDDDVDDVDADEEEQES). Ser-617 is subject to Phosphoserine.

Belongs to the TFIIIC subunit 5 family. As to quaternary structure, component of the TFIIIC complex composed of TFC1, TFC3, TFC4, TFC6, TFC7 and TFC8. The subunits are organized in two globular domains, tauA and tauB, connected by a proteolysis-sensitive and flexible linker. Interacts with TFC3, TFC4 and TFC6.

It is found in the nucleus. In terms of biological role, TFIIIC mediates tRNA and 5S RNA gene activation by binding to intragenic promoter elements. Upstream of the transcription start site, TFIIIC assembles the initiation complex TFIIIB-TFIIIC-tDNA, which is sufficient for RNA polymerase III recruitment and function. Part of the tauA domain of TFIIIC that binds boxA DNA promoter sites of tRNA and similar genes. Participates in the interconnection of tauA with tauB via its contacts with TFC3 and TFC6. Serves as a scaffold critical for tauA-DNA spatial configuration and tauB-DNA stability. This chain is Transcription factor tau 95 kDa subunit (TFC1), found in Saccharomyces cerevisiae (strain ATCC 204508 / S288c) (Baker's yeast).